A 461-amino-acid chain; its full sequence is Cysteine--tRNA ligase (461 aa).

Cys-31 contacts Zn(2+). A 'HIGH' region motif is present at residues 33 to 43 (PTVYDFAHIGN). Residues Cys-219, His-244, and Glu-248 each contribute to the Zn(2+) site. Positions 277-281 (KMSKS) match the 'KMSKS' region motif. Residue Lys-280 participates in ATP binding. The segment covering 436–452 (SEKGIQLKDGKDKETGE) has biased composition (basic and acidic residues). The disordered stretch occupies residues 436 to 461 (SEKGIQLKDGKDKETGERTTTWELKR).

The protein belongs to the class-I aminoacyl-tRNA synthetase family. As to quaternary structure, monomer. Requires Zn(2+) as cofactor.

Its subcellular location is the cytoplasm. It catalyses the reaction tRNA(Cys) + L-cysteine + ATP = L-cysteinyl-tRNA(Cys) + AMP + diphosphate. This Agrobacterium fabrum (strain C58 / ATCC 33970) (Agrobacterium tumefaciens (strain C58)) protein is Cysteine--tRNA ligase.